The chain runs to 315 residues: Calumenin-A (315 aa).

A signal peptide spans 1–19 (MEIRPLLMCFALCVVYATS). 6 EF-hand domains span residues 68–103 (ESKRRLGVIVEKIDGDSDGFVTEVELRAWIKKAQKK), 104–139 (YIYENVDRQWKDFDVNNDGMISWEEYRNVTYGTYLD), 151–186 (HMMARDERRFKMADQNRDQIANKEEFTAFLHPEEYD), 188–223 (MKDIVVLETMEDIDKNGDGFIDLNEYIGDMYNHEDE), 229–264 (WVATEREQFSEFRDKNKDGKMDREETMDWILPSDYD), and 265–300 (HAEAEAKHLVYESDSNKDGKLSKEEILNKYDLFVGS). Residues Asp-81, Asp-83, Asp-85, Glu-92, Asp-117, Asn-119, Asp-121, Met-123, and Glu-128 each contribute to the Ca(2+) site. Asn-131 carries N-linked (GlcNAc...) asparagine glycosylation. Ca(2+) contacts are provided by Asp-164, Asn-166, Asp-168, Glu-175, Asp-201, Asn-203, Asp-205, Glu-212, Asp-242, Asn-244, Asp-246, Lys-248, Glu-253, Asp-278, Asn-280, Asp-282, Lys-284, and Glu-289. Residues 312 to 315 (HDEF) carry the Prevents secretion from ER motif.

It belongs to the CREC family. As to quaternary structure, interacts with ggcx.

It localises to the endoplasmic reticulum membrane. Its subcellular location is the golgi apparatus. The protein resides in the secreted. It is found in the melanosome. The protein localises to the sarcoplasmic reticulum lumen. Its function is as follows. Involved in regulation of vitamin K-dependent carboxylation of multiple N-terminal glutamate residues. Seems to inhibit gamma-carboxylase ggcx. Binds 7 calcium ions with a low affinity. This Salmo salar (Atlantic salmon) protein is Calumenin-A (calua).